Reading from the N-terminus, the 450-residue chain is MRFSWKNICLPISCINNTNQKKTTTTNPPKEKLLLLSRQTSVPSRVYMSDFSNSTISLNDFSNSFFINIHIFTYEELKTITQGFSKYNFLGEGGFGEVYKGFVDDSLKTGLKDQPVAVKALKREGGQGHREWLAEVIILGQLKHPHLVNLVGYCCEDDERLLVYEYMERGNLEDHLFQKYGGALPWLTRVKILLGAAKGLEFLHKQEKPVIYRDFKPSNILLSSDFSSKLSDFGLATDGSEEEDSNFTKSVMGTEGYAAPEYISAGNLTTMSDVFSFGVVLLEMLTARKAVEKYRAQRGRNLVEWARPMLKDPNKLERIIDPSLEGKYSVEGIRKAAALAYQCLSHNPKSRPTMTTVVKTLEPILDLKDIQNGPFVYIVPVAGVSEVHEIKCKDDVKVVKEETEKDAKVFPRHRAGRRNRRKHKAMRSRAVYSDTALYKSLGTSLYNPAN.

T73 bears the Phosphothreonine mark. One can recognise a Protein kinase domain in the interval 84–365 (FSKYNFLGEG…TVVKTLEPIL (282 aa)). ATP-binding positions include 90-98 (LGEGGFGEV) and K119. The residue at position 164 (Y164) is a Phosphotyrosine. The active-site Proton acceptor is the D214. S218 carries the phosphoserine modification. T254 is modified (phosphothreonine). Y262 is modified (phosphotyrosine).

This sequence belongs to the protein kinase superfamily. Ser/Thr protein kinase family.

The catalysed reaction is L-seryl-[protein] + ATP = O-phospho-L-seryl-[protein] + ADP + H(+). It carries out the reaction L-threonyl-[protein] + ATP = O-phospho-L-threonyl-[protein] + ADP + H(+). This Arabidopsis thaliana (Mouse-ear cress) protein is Putative receptor-like protein kinase At1g72540.